The following is a 532-amino-acid chain: Drimenyl diphosphate synthase (532 aa).

Residues Arg-121, Lys-122, Gln-152, and Trp-154 each contribute to the (2E,6E)-farnesyl diphosphate site. Glu-158 contacts Mg(2+). PFTB repeat units lie at residues 275 to 317 (PAAM…RVAG), 325 to 367 (IAAA…APNP), 428 to 469 (KRQA…SRDG), and 475 to 518 (LARA…CVLL). The active-site Proton donor is Asp-304. Position 502 (Arg-502) interacts with (2E,6E)-farnesyl diphosphate.

Belongs to the terpene cyclase/mutase family. Mg(2+) serves as cofactor. The cofactor is Ni(2+). Requires Co(2+) as cofactor.

It catalyses the reaction (2E,6E)-farnesyl diphosphate = (5S,9S,10S)-drim-7-en-11-yl diphosphate. Functionally, catalyzes the cyclization of farnesyl diphosphate (FPP) to drimenyl diphosphate. This Streptantibioticus cattleyicolor (strain ATCC 35852 / DSM 46488 / JCM 4925 / NBRC 14057 / NRRL 8057) (Streptomyces cattleya) protein is Drimenyl diphosphate synthase.